We begin with the raw amino-acid sequence, 622 residues long: DNA polymerase II small subunit (622 aa).

The segment at 76–113 is disordered; it reads ISTGEGSQKVPDHEELEKITNESSVESSISTGETPKTE. The segment covering 85 to 95 has biased composition (basic and acidic residues); the sequence is VPDHEELEKIT. The segment covering 96 to 109 has biased composition (polar residues); the sequence is NESSVESSISTGET.

This sequence belongs to the DNA polymerase delta/II small subunit family. In terms of assembly, heterodimer of a large subunit and a small subunit.

The catalysed reaction is DNA(n) + a 2'-deoxyribonucleoside 5'-triphosphate = DNA(n+1) + diphosphate. The enzyme catalyses Exonucleolytic cleavage in the 3'- to 5'-direction to yield nucleoside 5'-phosphates.. In terms of biological role, possesses two activities: a DNA synthesis (polymerase) and an exonucleolytic activity that degrades single-stranded DNA in the 3' to 5' direction. Has a template-primer preference which is characteristic of a replicative DNA polymerase. This chain is DNA polymerase II small subunit (polB), found in Pyrococcus horikoshii (strain ATCC 700860 / DSM 12428 / JCM 9974 / NBRC 100139 / OT-3).